Here is a 283-residue protein sequence, read N- to C-terminus: Circadian clock oscillator protein KaiA (283 aa).

Positions 1–146 are psR domain, not required to form KaiA:KaiB:KaiC complex, or for a full KaiC phosphorylation cycle; that stretch reads MAQSTALTIC…LFRLPALKES (146 aa). The KaiA N-terminal domain maps to 3 to 163; the sequence is QSTALTICGL…RLSQKLKERL (161 aa). A flexible linker region spans residues 164-172; that stretch reads GYLGVYYKR. A KaiA C-terminal domain is found at 173 to 281; that stretch reads DTAFFFRRMS…CEMYRRSIPR (109 aa).

This sequence belongs to the KaiA family. In terms of assembly, homodimer. The KaiABC complex composition changes during the circadian cycle to control KaiC phosphorylation. Complexes KaiC(6), KaiA(2-4):KaiC(6), KaiB(6):KaiC(6) and KaiC(6):KaiB(6):KaiA(12) are among the most important forms, many form cooperatively. Binds to KaiB and KaiC, the N-terminus (pseudoreceiver domain PsR) is not required for either interaction. 1 KaiB binds to one subunit of the KaiA homodimer. KaiA and CikA bind to the same region of the KaiB(fs) form and therefore compete.

Functionally, key component of the KaiABC oscillator complex, which constitutes the main circadian regulator in cyanobacteria. Complex composition changes during the circadian cycle to control KaiC phosphorylation. KaiA stimulates KaiC autophosphorylation, while KaiB sequesters KaiA, leading to KaiC autodephosphorylation. KaiA binding to the KaiC CII domain during the subjective day yields KaiA(2-4):KaiC(6) complexes which stimulate KaiC autophosphorylation. Phospho-Ser-431 KaiC accumulation triggers binding of KaiB during the subjective night to form the KaiB(6):KaiC(6) complex, leading to changes in the output regulators CikA and SasA. KaiB(6):KaiC(6) formation exposes a site for KaiA binding on KaiB that sequesters KaiA from KaiC's CII domain, making the KaiC(6):KaiB(6):KaiA(12) complex resulting in KaiC autodephosphorylation. Complete dephosphorylation of KaiC leads to dissociation of KaiA(2):KaiB(1), completing 1 cycle of the Kai oscillator. Formation of the KaiB:KaiC complex is promoted by KaiA, helping switch KaiC from its autophosphorylation to autodephosphatase function. In terms of biological role, binds oxidized quinones via the N-terminal PsR domain, allowing it to sense redox changes and possibly mediate clock input. This is Circadian clock oscillator protein KaiA from Thermosynechococcus vestitus (strain NIES-2133 / IAM M-273 / BP-1).